Here is a 202-residue protein sequence, read N- to C-terminus: Small ribosomal subunit protein uS4 (202 aa).

The disordered stretch occupies residues 22 to 43 (TRKSARRAYPPGQHGQNRKKRS). The S4 RNA-binding domain maps to 90–152 (MRLDNTVFRL…APSRKLVENN (63 aa)).

The protein belongs to the universal ribosomal protein uS4 family. Part of the 30S ribosomal subunit. Contacts protein S5. The interaction surface between S4 and S5 is involved in control of translational fidelity.

Its function is as follows. One of the primary rRNA binding proteins, it binds directly to 16S rRNA where it nucleates assembly of the body of the 30S subunit. Functionally, with S5 and S12 plays an important role in translational accuracy. The sequence is that of Small ribosomal subunit protein uS4 from Trichormus variabilis (strain ATCC 29413 / PCC 7937) (Anabaena variabilis).